Here is a 3672-residue protein sequence, read N- to C-terminus: MSPYDSSPWATKALFLIVTLLAQFTYSQVLTPSQITISHRKPITATSTCGEIQGQPVTEIYCSLTGSTQYTPLNSYSYQDDEQQKSWSQYENPMVRGGHGCGHCNAGNENSHPAANMVDGNNSWWMSPPLSRGLQHNEVNITIDLEQEFHVAYVWIQMANSPRPGSWVLERSTDHGKTYQPWFNFAENAAECMRRFGMESLSPISEDDSVTCRTDMASLQPLENAEMVIRILEHRPSSRQFATSEALQNFTRATNVRLRLLGTRTLQGHLMDMNEWRDPTVTRRYFYAIKEIMIGGRCVCNGHAVTCDILEPQRPKSLLCRCEHNTCGDMCERCCPGFVQKQWQAATAHNNFTCEACNCFGRSNECEYDAEVDLNKQSIDSQGNYEGGGVCKNCRENTEGVNCNKCSFGYFRPEGVTWNEPQPCKVCDCDPDKHTGACAEETGKCECLPRFVGEDCDQCASGYYDAPKCKPCECNVNGTIGDVCLPEDGQCPCKAGFGGTFCETCADGYTNVTAGCVECVCDATGSEHGNCSASTGQCECKPAYAGLSCDKCQVGYFGDDCKFCNCDPMGTEGGVCDQTTGQCLCKEGFAGDKCDRCDIAFYGYPNCKACACDGAGITSPECDATSGQCPCNGNFTGRTCDKCAAGFYNYPDCRGCECLLSGAKGQTCDSNGQCYCKGNFEGERCDRCKPNFYNFPICEECNCNPSGVTRDFQGCDKVSPGELCSCRKHVTGRICDQCKPTFWDLQYHHEDGCRSCDCNVNGTISGLNTCDLKTGQCMCKKNADGRRCDQCADGFYRLNSYNQMGCESCHCDIGGALRAECDITSGQCKCRPRVTGLRCDQPIENHYFPTLWHNQYEAEDAHTEDQKPVRFAVDPEQFADFSWRGYAVFSPIQDKILIDVDITKATVYRLLFRYRNPTSVPVTATVTINPRFTHTHDVEQTGKATFAPGDLPAMKEITVDGKPFVLNPGKWSLAISTKQRLFLDYVVVLPAEYYEGTVLRQRAPQPCLSHSTKNTTCVDLIYPPIPSVSRQFVDMDKVPFNYINEDGTTTALEHVPVEILLSEITGPAAFVRADENPRVVEAKLDVPETGEYVIVLEYHNREETDGNIGVGISQNDKEVLNGNAVIHHCPYATFCRELVSSEGTIPYIPLEKGEATVRLNIKPNHEFGLAGVQLIKKSDFSSEYLQQVPVCIKKDARCVQQSYPPAADSVTTEAESGSNMDKSILGDKLPFPVSNSKEMRVVPLDDAQATVEISGVVPTRGHYMFMVHYFNPDNTPINIDVLIQNEHYFQGDSCNSFACSSVPLAFCPSISGCRALIRDKERPEVIQFYMDDKYTATFYHNSSQKGPIYIDSITAVPYNSYKDKLMEPLALDLSNEFLKECSEDNLKNHPESVSDFCKQKIFSLTTDFNAAALSCDCVAQGSESFQCEQYGGQCKCKPGVIGRRCERCAPGYYNFPECIKCQCNAGQQCDERTGQCFCPPHVEGQTCDRCVSNAFGYDPLIGCQKCGCHPQGSEGGNLVCDPESGQCLCRESMGGRQCDRCLAGFYGFPHCYGCSCNRAGTTEEICDATNAQCKCKENVYGGRCEACKAGTFDLSAENPLGCVNCFCFGVTDSCRSSMYPVTIMSVDMSSFLTTDDNGMVDNKDDTVIYTSEETSPNSVYFNVPIEKKDYTTSYGLKLTFKLSTVPRGGRKSMNADADVRLTGANMTIEYWASEQPTNPEEQFTVKCKLVPENFLTAEGKTVTREELMKVLHSLQNITLKASYFDHPKTSTLYEFGLEISEPNGVDSVIKASSVEQCQCPAPYTGPSCQLCASGYHRVQSGSFLGACVPCECNGHSATCDPDTGICTDCEHNTNGDHCEFCNEGHYGNATNGSPYDCMACACPFAPTNNFAKSCDVSEEGQLLQCNCKPGYTGDRCDRCASGFFGHPQISGESCSPCQCNGNNNLTDSRSCHPNSGDCYLCEQNTDGRHCESCAAWFYGDAVTAKNCSSCECSQCGSQYCDNKSGGCECKINVEGDSCDRCKPDHWGFSKCQGCQGCHCGTAAFNTQCNVENGQCTCRPGATGMRCEHCEHGYWNYGEHGCDKCDCEADLSMGTVCDVRTGQCHCQEGATGSRCDQCLPSYLRIPTYGCRRCDECVHHLIGDVDNLELEIDVLGTAIANISSATIVGARLARNKKEFNDINEITKMLNDEENSFGNVFGDAQDILTNSTQIQNKLVRTKTHSQNSVSSAKNITLNGTEFLQEVMKRAQRARQSVRSLAEIALAIGSSSKAVNVDPRLLKEAEETLMTLEAASADQYPEKAQTVPGKLEEIQKKIQEETEKLDKQKETFEAQKKRAEELAAYLNSAQQLLKESKSKADKSNNIAKMLQLTKVENLVAAITDDLERVEAAKGEFQKLNVAIGNITENLKDKREEMTHAVTTLNETRNDVAEALEAAKKRVRRDEKSVDMQLVNAKAHELHLQATTLRQTFDNNKDNTDQAVEAANAFSNLTDTLKNAKAQIDNAYEALSAEPAFAESVQNARDKPFPDETKEKIDALSKTVSQDLKETEKLKKQLEQLTELSEKLRKRKEAVKAGIPKYSKNTLDSIDEKVQEVEKLKAEIDANIEETRAKISEIAGKAEEITEKANSAMEGIRLARRNSVQLNKLAPVIVSKFEELKKLSSARSAKVDSVSDKVSQIKEMIAVARDAANRIKLGAHFEKGSSLDLNIPQRVTRSAAHADISFYFRTEQEHGIPLFFGNEETAVGSRAVPTADYVAAEIEYGRPKITVDLGDAPAVVKLDTPVNDGLWRRLNIERIGKTVSVTLSKPNSVETAETKSSVAGGNKSVLNLNQQISRLFVGGVPTSARISKDLYNRDFVGDIESLKLHGEPIGLWNSREKGNTNVNGAQKKPKITDNADELVVSLDGEGYTSYKPSHWNPRKATKISLSFLTFSPHGLLFFVGKDKDFMALELSDGGVKLSVDLGSGVGQWITESSNYNDGKWHTVSIVREEKHVKIMIDGETEVLEGDVPGKDSEMSVTEFLYIGGTPSGLSVRTTIVPLRGCIKSVKLGSDNVDLESSHASKGVRSGCPLHSVRTVSFLSDRTTASFNNATEFSEDVSVTFKFKTRSIRQPSSLFTVNDDEDSVLSVSINEDGILTVTSGEDIATLELAASPDEKWHYVSIRKTKYIIRIDADDSFSNEVARKHADDSNPDASFLSAFFGKSGETPSFVGCIGDVTLNGKLLDFANSEIKEISLNGCSLSDDENISTTTTAAPKPTDDSDVAVLPIDEEEESTTTTTTTTTEEPTEEPAEARPDGHCSLPEDPMVQFEDAEGFNFGSQQYSRIEYDILPEAIDKSGEFTFKIRPTSDNGIIFIATNKRTDHIAVMLEHGRVVFTYDTGSGQVIIKSDKSIIDGRWHTIKVSRRGKSAHLIVDDNSYESEGAANQNEDLIETQPPFYVGGVPADLAGFARNLVVGVRSQFSGCIKDFKLNGKSLDNGKEFGTEQCSQFSEPGMYFGKDGGYAIVQKDYEVGLTFGLEVEMRPRMKNGILFSVGVLEYITVEFVNGSIKTTVESGSGGEELWHHPDIENQYCDGQWQSFKISKKRNLLTVAVNGKAHLKILKKAKTDVLTKDPLYFGGLPEGVTNKGIKTNKPFVGCIRFVSFGLKKDRKIRRKKQVDTERFDVFGDVHRNACPAI.

The signal sequence occupies residues 1–27; that stretch reads MSPYDSSPWATKALFLIVTLLAQFTYS. Residues 28 to 297 enclose the Laminin N-terminal domain; it reads QVLTPSQITI…AIKEIMIGGR (270 aa). N-linked (GlcNAc...) asparagine glycosylation is found at N121, N140, and N249. 43 disulfides stabilise this stretch: C298/C307, C300/C320, C322/C331, C334/C354, C357/C366, C359/C391, C394/C403, C406/C424, C427/C438, C429/C445, C447/C456, C459/C469, C472/C484, C474/C491, C493/C502, C505/C516, C519/C531, C521/C538, C540/C549, C552/C561, C564/C576, C566/C583, C585/C594, C597/C607, C610/C622, C612/C629, C631/C640, C643/C653, C656/C668, C658/C674, C676/C685, C688/C698, C701/C715, C703/C724, C726/C735, C738/C753, C756/C770, C758/C777, C779/C788, C791/C806, C809/C821, C811/C828, and C830/C839. Laminin EGF-like domains lie at 298-356, 357-426, 427-471, 472-518, 519-563, 564-609, 610-655, 656-700, 701-755, and 756-808; these read CVCN…TCEA, CNCF…PCKV, CDCD…KCKP, CECN…GCVE, CVCD…DCKF, CNCD…NCKA, CACD…DCRG, CECL…ICEE, CNCN…GCRS, and CDCN…GCES. N351 is a glycosylation site (N-linked (GlcNAc...) asparagine). N477 carries an N-linked (GlcNAc...) asparagine glycan. N511 and N530 each carry an N-linked (GlcNAc...) asparagine glycan. The N-linked (GlcNAc...) asparagine glycan is linked to N634. N761 is a glycosylation site (N-linked (GlcNAc...) asparagine). A Laminin EGF-like 11; truncated domain is found at 809–839; sequence CHCDIGGALRAECDITSGQCKCRPRVTGLRC. Residues N1014 and N1341 are each glycosylated (N-linked (GlcNAc...) asparagine). Disulfide bonds link C1415–C1427, C1417–C1434, C1436–C1445, C1448–C1458, C1461–C1469, C1463–C1476, C1478–C1487, C1490–C1503, C1506–C1520, C1508–C1527, C1529–C1538, C1541–C1551, C1554–C1566, C1556–C1573, C1575–C1584, and C1587–C1602. Laminin EGF-like domains lie at 1415-1460, 1461-1505, 1506-1553, and 1554-1604; these read CDCV…ECIK, CQCN…GCQK, CGCH…HCYG, and CSCN…GCVN. The 10-residue stretch at 1605–1614 folds into the Laminin EGF-like 16; first part domain; it reads CFCFGVTDSC. A Laminin IV type A domain is found at 1615-1796; that stretch reads RSSMYPVTIM…SVIKASSVEQ (182 aa). 2 N-linked (GlcNAc...) asparagine glycosylation sites follow: N1705 and N1756. The region spanning 1797–1829 is the Laminin EGF-like 16; second part domain; that stretch reads CQCPAPYTGPSCQLCASGYHRVQSGSFLGACVP. Disulfide bonds link C1830-C1839, C1832-C1846, C1849-C1858, C1861-C1877, C1880-C1894, C1882-C1905, C1907-C1916, C1919-C1934, C1937-C1951, C1939-C1958, C1961-C1970, C1973-C1987, C1990-C2000, C1992-C2007, C2009-C2018, C2021-C2031, C2037-C2048, C2039-C2055, C2057-C2066, C2069-C2081, C2084-C2096, C2086-C2103, C2105-C2114, and C2117-C2129. 6 Laminin EGF-like domains span residues 1830 to 1879, 1880 to 1936, 1937 to 1989, 1990 to 2036, 2037 to 2083, and 2084 to 2131; these read CECN…DCMA, CACP…SCSP, CQCN…NCSS, CECS…GCQG, CHCG…GCDK, and CDCE…GCRR. A glycan (N-linked (GlcNAc...) asparagine) is linked at N1868. N-linked (GlcNAc...) asparagine glycosylation is present at N1944. N1986 carries N-linked (GlcNAc...) asparagine glycosylation. N2002 carries an N-linked (GlcNAc...) asparagine glycan. 8 N-linked (GlcNAc...) asparagine glycosylation sites follow: N2159, N2207, N2231, N2235, N2401, N2421, N2487, and N2821. 3 consecutive Laminin G-like domains span residues 2693 to 2884, 2896 to 3066, and 3072 to 3235; these read GAHF…VNGA, ELVV…RSGC, and RTVS…LNGC. C3040 and C3066 are joined by a disulfide. N-linked (GlcNAc...) asparagine glycosylation occurs at N3087. Residues C3209 and C3235 are joined by a disulfide bond. The disordered stretch occupies residues 3236–3294; that stretch reads SLSDDENISTTTTAAPKPTDDSDVAVLPIDEEEESTTTTTTTTTEEPTEEPAEARPDGH. N3242 carries an N-linked (GlcNAc...) asparagine glycan. A compositionally biased stretch (low complexity) spans 3271–3280; that stretch reads TTTTTTTTTE. Laminin G-like domains lie at 3310–3482 and 3488–3669; these read GFNF…TEQC and PGMY…RNAC. C3460 and C3482 form a disulfide bridge. N3541 carries an N-linked (GlcNAc...) asparagine glycan. C3633 and C3669 are joined by a disulfide.

Laminin is a complex glycoprotein, consisting of three different polypeptide chains (alpha, beta, gamma), which are bound to each other by disulfide bonds into a cross-shaped molecule comprising one long and three short arms with globules at each end.

The protein resides in the secreted. Its subcellular location is the extracellular space. The protein localises to the extracellular matrix. It localises to the basement membrane. In terms of biological role, binding to cells via a high affinity receptor, laminin is thought to mediate the attachment, migration and organization of cells into tissues during embryonic development by interacting with other extracellular matrix components. Required to assemble a stable basement membrane and for organizing receptor complexes and cytoskeletal components to the proper cell surfaces. During embryogenesis, does not require the presence of collagen type IV in order to associate with cell surfaces, prior to assembly of the prototypical basement membrane. During the formation of neuromuscular junctions at the larval stage, negatively regulates membrane protrusion from body wall muscles, probably downstream of the integrin complex formed by pat-2 and pat-3. Probably plays a distinct role from the related laminin subunit alpha lam-3. This is Laminin-like protein epi-1 (epi-1) from Caenorhabditis elegans.